Reading from the N-terminus, the 355-residue chain is NADH-quinone oxidoreductase subunit H (355 aa).

8 helical membrane-spanning segments follow: residues 25-45, 91-111, 126-146, 170-190, 205-225, 253-273, 290-310, and 330-350; these read LVRI…LILW, WLYL…WAVI, LLYA…AGWA, MGFA…SEIV, FLSW…VSGI, MAFA…SALA, FIPG…VFIW, and VFLP…MSPL.

This sequence belongs to the complex I subunit 1 family. As to quaternary structure, NDH-1 is composed of 14 different subunits. Subunits NuoA, H, J, K, L, M, N constitute the membrane sector of the complex.

Its subcellular location is the cell inner membrane. It catalyses the reaction a quinone + NADH + 5 H(+)(in) = a quinol + NAD(+) + 4 H(+)(out). Functionally, NDH-1 shuttles electrons from NADH, via FMN and iron-sulfur (Fe-S) centers, to quinones in the respiratory chain. The immediate electron acceptor for the enzyme in this species is believed to be ubiquinone. Couples the redox reaction to proton translocation (for every two electrons transferred, four hydrogen ions are translocated across the cytoplasmic membrane), and thus conserves the redox energy in a proton gradient. This subunit may bind ubiquinone. In Burkholderia vietnamiensis (strain G4 / LMG 22486) (Burkholderia cepacia (strain R1808)), this protein is NADH-quinone oxidoreductase subunit H.